Reading from the N-terminus, the 80-residue chain is Acyl carrier protein (80 aa).

Residues 4-79 form the Carrier domain; sequence EAILEKVRSI…DAVKYIEDKQ (76 aa). An O-(pantetheine 4'-phosphoryl)serine modification is found at Ser-39.

The protein belongs to the acyl carrier protein (ACP) family. 4'-phosphopantetheine is transferred from CoA to a specific serine of apo-ACP by AcpS. This modification is essential for activity because fatty acids are bound in thioester linkage to the sulfhydryl of the prosthetic group.

It is found in the cytoplasm. It participates in lipid metabolism; fatty acid biosynthesis. Carrier of the growing fatty acid chain in fatty acid biosynthesis. The sequence is that of Acyl carrier protein from Parasynechococcus marenigrum (strain WH8102).